Consider the following 156-residue polypeptide: Cell division protein SepF (156 aa).

The segment at 30-49 (NAAAPSTTETSVVRQDDRPK) is disordered.

It belongs to the SepF family. In terms of assembly, homodimer. Interacts with FtsZ.

The protein resides in the cytoplasm. Functionally, cell division protein that is part of the divisome complex and is recruited early to the Z-ring. Probably stimulates Z-ring formation, perhaps through the cross-linking of FtsZ protofilaments. Its function overlaps with FtsA. The sequence is that of Cell division protein SepF from Exiguobacterium sp. (strain ATCC BAA-1283 / AT1b).